We begin with the raw amino-acid sequence, 154 residues long: 3-hydroxyacyl-[acyl-carrier-protein] dehydratase FabZ (154 aa).

His-57 is an active-site residue.

It belongs to the thioester dehydratase family. FabZ subfamily.

The protein localises to the cytoplasm. The catalysed reaction is a (3R)-hydroxyacyl-[ACP] = a (2E)-enoyl-[ACP] + H2O. Its function is as follows. Involved in unsaturated fatty acids biosynthesis. Catalyzes the dehydration of short chain beta-hydroxyacyl-ACPs and long chain saturated and unsaturated beta-hydroxyacyl-ACPs. This chain is 3-hydroxyacyl-[acyl-carrier-protein] dehydratase FabZ, found in Sinorhizobium medicae (strain WSM419) (Ensifer medicae).